A 251-amino-acid polypeptide reads, in one-letter code: GTP cyclohydrolase 1 type 2 homolog (251 aa).

A divalent metal cation is bound by residues His-64, His-65, Asp-102, His-219, and Glu-223.

The protein belongs to the GTP cyclohydrolase I type 2/NIF3 family. Homohexamer.

The polypeptide is GTP cyclohydrolase 1 type 2 homolog (Chlamydia pneumoniae (Chlamydophila pneumoniae)).